The sequence spans 281 residues: Imidazoleglycerol-phosphate dehydratase, chloroplastic (281 aa).

The transit peptide at M1–R85 directs the protein to the chloroplast. Substrate contacts are provided by residues E95, H121–H129, H147–E151, R173, and R195. H121, H147, H148, and E151 together coordinate Mn(2+). H219, H243, H244, and E247 together coordinate Mn(2+). Substrate contacts are provided by residues H243–K251 and S273–K275.

Belongs to the imidazoleglycerol-phosphate dehydratase family. The cofactor is Mn(2+).

It localises to the plastid. It is found in the chloroplast. It catalyses the reaction D-erythro-1-(imidazol-4-yl)glycerol 3-phosphate = 3-(imidazol-4-yl)-2-oxopropyl phosphate + H2O. Its pathway is amino-acid biosynthesis; L-histidine biosynthesis; L-histidine from 5-phospho-alpha-D-ribose 1-diphosphate: step 6/9. The protein is Imidazoleglycerol-phosphate dehydratase, chloroplastic of Pisum sativum (Garden pea).